A 972-amino-acid chain; its full sequence is POM121-like protein 2 (972 aa).

6 disordered regions span residues 1–67, 281–302, 328–359, 406–431, 676–726, and 953–972; these read MGSY…PANP, LKKA…SGQL, TEED…IPEM, GISS…PVTD, LGLS…AIDG, and SKTL…TYKK. Residues 40 to 57 show a composition bias toward basic residues; that stretch reads RVQHVHRAQPARRHRPAR. Polar residues-rich tracts occupy residues 287–302 and 339–352; these read SPNS…SGQL and VPSN…TGTA. A compositionally biased stretch (low complexity) spans 413–431; sequence PSIASTQASPSSPTTPVTD. The segment covering 677 to 696 has biased composition (polar residues); that stretch reads GLSSTNQPPVTSSNSNVTSA. The span at 697 to 706 shows a compositional bias: low complexity; sequence LTSSLGSSPK.

This sequence belongs to the POM121 family.

In Mus musculus (Mouse), this protein is POM121-like protein 2 (Pom121l2).